The primary structure comprises 294 residues: tRNA dimethylallyltransferase (294 aa).

11–18 lines the ATP pocket; it reads GPTAVGKT. Substrate is bound at residue 13–18; sequence TAVGKT. The interaction with substrate tRNA stretch occupies residues 36–39; sequence DSQQ.

The protein belongs to the IPP transferase family. As to quaternary structure, monomer. Mg(2+) serves as cofactor.

It carries out the reaction adenosine(37) in tRNA + dimethylallyl diphosphate = N(6)-dimethylallyladenosine(37) in tRNA + diphosphate. Functionally, catalyzes the transfer of a dimethylallyl group onto the adenine at position 37 in tRNAs that read codons beginning with uridine, leading to the formation of N6-(dimethylallyl)adenosine (i(6)A). This chain is tRNA dimethylallyltransferase, found in Lactococcus lactis subsp. cremoris (strain SK11).